Consider the following 477-residue polypeptide: UTP--glucose-1-phosphate uridylyltransferase (477 aa).

N-acetylalanine is present on A2. UTP is bound by residues 92–95, K106, Q169, and G198; that span reads LNGG. Position 94-95 (94-95) interacts with substrate; the sequence is GG. Substrate contacts are provided by residues H199 and 227-229; that span reads NSD. UTP contacts are provided by D229 and K367.

The protein belongs to the UDPGP type 1 family. Monomer. The cofactor is Mg(2+).

It localises to the cytoplasm. The enzyme catalyses alpha-D-glucose 1-phosphate + UTP + H(+) = UDP-alpha-D-glucose + diphosphate. Inhibition by uncomplexed, free UTP. Plays a central role as a glucosyl donor in cellular metabolic pathways. This is UTP--glucose-1-phosphate uridylyltransferase from Solanum tuberosum (Potato).